Here is a 200-residue protein sequence, read N- to C-terminus: MQEKDSKDVTMEDEETIASQEEIEVEGNSEESSKEEESNNSEISDENLSEENLKLKDENEKLKNELDAAKDRLLRLSAEYENYRNRTAKEKEGIYTDACSDVINEMLPTLDNLERAASTEGSAEDIKKGVEMVVKQFKNSLSKLGIEEIPSEGKFDPNLHNAVMHIEDEGYGENEVVEVLQKGYKRGDKVLRHSMVKVAN.

The segment covering 1-10 has biased composition (basic and acidic residues); it reads MQEKDSKDVT. Residues 1-57 are disordered; it reads MQEKDSKDVTMEDEETIASQEEIEVEGNSEESSKEEESNNSEISDENLSEENLKLKD. Residues 11-29 are compositionally biased toward acidic residues; that stretch reads MEDEETIASQEEIEVEGNS.

It belongs to the GrpE family. As to quaternary structure, homodimer.

It localises to the cytoplasm. Its function is as follows. Participates actively in the response to hyperosmotic and heat shock by preventing the aggregation of stress-denatured proteins, in association with DnaK and GrpE. It is the nucleotide exchange factor for DnaK and may function as a thermosensor. Unfolded proteins bind initially to DnaJ; upon interaction with the DnaJ-bound protein, DnaK hydrolyzes its bound ATP, resulting in the formation of a stable complex. GrpE releases ADP from DnaK; ATP binding to DnaK triggers the release of the substrate protein, thus completing the reaction cycle. Several rounds of ATP-dependent interactions between DnaJ, DnaK and GrpE are required for fully efficient folding. This is Protein GrpE from Clostridium acetobutylicum (strain ATCC 824 / DSM 792 / JCM 1419 / IAM 19013 / LMG 5710 / NBRC 13948 / NRRL B-527 / VKM B-1787 / 2291 / W).